Consider the following 132-residue polypeptide: RuBisCO chaperone RbcX (132 aa).

Residues 110-132 (HLSLSNPSPESEQQTISDTDWDH) are disordered. Residues 111 to 132 (LSLSNPSPESEQQTISDTDWDH) are compositionally biased toward polar residues.

This sequence belongs to the RbcX family. Homodimer. Interacts with the exposed C-terminal peptide of RbcL via its central cleft, contacts a second RbcL monomer via its peripheral polar surface. RbcX and Raf1 can bind simultaneously to RbcL.

It localises to the carboxysome. Its subcellular location is the cytoplasm. Its function is as follows. An RbcL-specific chaperone. The central cleft of the RbcX homodimer (RbcX2) binds the C-terminus of an RbcL monomer, stabilizing the C-terminus and probably preventing its reassociation with chaperonin GroEL-ES. At the same time the peripheral region of RbcX2 binds a second RbcL monomer, bridging the RbcL homodimers in the correct orientation. The RbcX2(2)-bound RbcL dimers then assemble into the RbcL8 core (RbcL8-(RbcX2)8). RbcS binding triggers the release of RbcX2. In terms of biological role, when rbcL-rbcX-rbcS or rbcL-rbcS were overexpressed in E.coli no change in reconstituted RuBisCO activity was observed, which suggests RbcX plays no role in RuBisCO assembly in this system. However in PubMed:8472962 E.coli chaperones groL and groS were also overexpressed, which may compensate for lack of rbcX. The polypeptide is RuBisCO chaperone RbcX (Nostoc sp. (strain PCC 7120 / SAG 25.82 / UTEX 2576)).